The sequence spans 318 residues: NAD(P)H-dependent D-xylose reductase (318 aa).

The active-site Proton donor is Y48. H110 is a substrate binding site. NAD(+) contacts are provided by residues 165–166 (SN), 214–223 (SNFGPLSFLE), and 270–280 (KSTFPNTLAVN).

It belongs to the aldo/keto reductase family.

The enzyme catalyses xylitol + NAD(+) = D-xylose + NADH + H(+). It carries out the reaction xylitol + NADP(+) = D-xylose + NADPH + H(+). The protein operates within carbohydrate metabolism; D-xylose degradation. Functionally, reduces D-xylose into xylitol. Has a preference for NADPH, but can also utilize NADH as cosubstrate. This is NAD(P)H-dependent D-xylose reductase (XYL1) from Pachysolen tannophilus (Yeast).